The following is a 222-amino-acid chain: Small ribosomal subunit protein uS3 (222 aa).

Residues 39-107 (IRKYIKTKFY…QININIAEIK (69 aa)) form the KH type-2 domain.

It belongs to the universal ribosomal protein uS3 family. In terms of assembly, part of the 30S ribosomal subunit. Forms a tight complex with proteins S10 and S14.

In terms of biological role, binds the lower part of the 30S subunit head. Binds mRNA in the 70S ribosome, positioning it for translation. This Carboxydothermus hydrogenoformans (strain ATCC BAA-161 / DSM 6008 / Z-2901) protein is Small ribosomal subunit protein uS3.